We begin with the raw amino-acid sequence, 1104 residues long: Extended synaptotagmin-1 (1104 aa).

Met-1 is modified (N-acetylmethionine). The Cytoplasmic segment spans residues 1-38 (MERSPGEGPSPSPMDQPSAPSDPTDQPPAAHAKPDPGS). Residues 1-48 (MERSPGEGPSPSPMDQPSAPSDPTDQPPAAHAKPDPGSGGQPAGPGAA) are disordered. Residues 37–47 (GSGGQPAGPGA) show a composition bias toward gly residues. A helical membrane pass occupies residues 39 to 59 (GGQPAGPGAAGEALAVLTSFG). The Lumenal segment spans residues 60 to 62 (RRL). The helical transmembrane segment at 63–83 (LVLIPVYLAGAVGLSVGFVLF) threads the bilayer. At 84–1104 (GLALYLGWRR…LMDNKDKGSS (1021 aa)) the chain is on the cytoplasmic side. Positions 91-116 (WRRVRDEKERSLRAARQLLDDEEQLT) form a coiled coil. Residues 135–313 (DVEKAEWLNK…LPNRLLVPLV (179 aa)) form the SMP-LTD domain. C2 domains lie at 312–433 (LVPD…DDWF), 460–580 (QVLQ…QLSS), 627–751 (SVDA…DEWL), and 777–899 (LEEV…TLSS). Residue Ser-324 is modified to Phosphoserine; by CDK5. Residues Lys-344, Asp-345, Asp-357, Asp-404, Asp-406, Asp-408, Asp-410, and Asp-411 each coordinate Ca(2+). The tract at residues 617–641 (VDSENPQRGSSVDAPPRPCHTTPDS) is disordered. N6-acetyllysine is present on Lys-817. Phosphoserine occurs at positions 820 and 941. Residues 924-950 (SHSYSHSSSSLSEEPELSGGPPHITSS) form a disordered region. Residues 925-946 (HSYSHSSSSLSEEPELSGGPPH) are compositionally biased toward low complexity. At Thr-948 the chain carries Phosphothreonine. Ser-949 and Ser-963 each carry phosphoserine. The C2 5 domain maps to 971–1093 (PLGQVKLTLW…DLSQGVARWY (123 aa)). At Tyr-1009 the chain carries Phosphotyrosine. The required for phosphatidylinositol 4,5-bisphosphate-dependent location at the cell membrane stretch occupies residues 1018–1025 (KNRGTKRR). A Phosphoserine modification is found at Ser-1034.

Belongs to the extended synaptotagmin family. As to quaternary structure, interacts with ESYT2 and ESYT3. Interacts with ADGRD1; inhibiting the G-protein-coupled receptor activity of ADGRD1. Interaction with ADGRD1 is abolished when cytosolic calcium increases, relieving ADGRD1 G-protein-coupled receptor activity. Interacts (phosphorylated form) with SLC2A4. In terms of processing, phosphorylated on Ser residues in insulin-treated adipocytes (in vitro); this promotes interaction with SLC2A4. Widely expressed.

The protein localises to the endoplasmic reticulum membrane. Its subcellular location is the cell membrane. Its function is as follows. Binds calcium (via the C2 domains) and translocates to sites of contact between the endoplasmic reticulum and the cell membrane in response to increased cytosolic calcium levels. Helps tether the endoplasmic reticulum to the cell membrane and promotes the formation of appositions between the endoplasmic reticulum and the cell membrane. Acts as an inhibitor of ADGRD1 G-protein-coupled receptor activity in absence of cytosolic calcium. Binds glycerophospholipids in a barrel-like domain and may play a role in cellular lipid transport. The sequence is that of Extended synaptotagmin-1 from Homo sapiens (Human).